The following is a 178-amino-acid chain: Ras-like protein (178 aa).

Position 1 to 6 (1 to 6) interacts with GTP; sequence GGVGKS. The Effector region signature appears at 21–29; sequence YDPTIEDSY. Residues 46-50 and 105-108 each bind GTP; these read DTAGQ and NKCD. A Cysteine methyl ester modification is found at C175. C175 is lipidated: S-geranylgeranyl cysteine. The propeptide at 176–178 is removed in mature form; the sequence is SIL.

The protein belongs to the small GTPase superfamily. Ras family.

It is found in the cell membrane. It catalyses the reaction GTP + H2O = GDP + phosphate + H(+). With respect to regulation, alternates between an inactive form bound to GDP and an active form bound to GTP. Activated by a guanine nucleotide-exchange factor (GEF) and inactivated by a GTPase-activating protein (GAP). In terms of biological role, ras proteins bind GDP/GTP and possess intrinsic GTPase activity. The sequence is that of Ras-like protein from Artemia salina (Brine shrimp).